A 167-amino-acid polypeptide reads, in one-letter code: Peptide deformylase (167 aa).

Cysteine 91 and histidine 133 together coordinate Fe cation. Glutamate 134 is a catalytic residue. Histidine 137 contributes to the Fe cation binding site.

The protein belongs to the polypeptide deformylase family. It depends on Fe(2+) as a cofactor.

The enzyme catalyses N-terminal N-formyl-L-methionyl-[peptide] + H2O = N-terminal L-methionyl-[peptide] + formate. Removes the formyl group from the N-terminal Met of newly synthesized proteins. Requires at least a dipeptide for an efficient rate of reaction. N-terminal L-methionine is a prerequisite for activity but the enzyme has broad specificity at other positions. The protein is Peptide deformylase of Nitrosococcus oceani (strain ATCC 19707 / BCRC 17464 / JCM 30415 / NCIMB 11848 / C-107).